Consider the following 205-residue polypeptide: MTPTGTLYTVSAPSGAGKTSLVSALIDTTSNIMVSVSHTTRAKRPGEQEGVNYHFVSHEQFATMVENNAFLEHAQVFTNFYGTSKQWVEDTLAKGIDVILEIDWQGAQQVRKLIPAAKSVFILPPSRECLRERLTGRGQDDESVIDARMAEAKSEISHYVEAQYLIVNDDFDTALTEFRSIVVANRLALEKQQDKHQSLLESLLS.

A Guanylate kinase-like domain is found at 5–183; that stretch reads GTLYTVSAPS…ALTEFRSIVV (179 aa). 12-19 is an ATP binding site; that stretch reads APSGAGKT.

The protein belongs to the guanylate kinase family.

It localises to the cytoplasm. The catalysed reaction is GMP + ATP = GDP + ADP. Essential for recycling GMP and indirectly, cGMP. The chain is Guanylate kinase from Saccharophagus degradans (strain 2-40 / ATCC 43961 / DSM 17024).